Consider the following 436-residue polypeptide: Protein translocase subunit SecY (436 aa).

10 helical membrane-spanning segments follow: residues 18 to 38 (IAFT…PATG), 69 to 89 (LLQV…SIIV), 116 to 138 (YTRY…LART), 154 to 174 (ILTV…VMWF), 187 to 207 (MSLL…GQVV), 214 to 234 (VFAI…FVEE), 266 to 286 (MANV…GILI), 314 to 334 (PVYM…YVSI), 375 to 395 (VVGA…FAVI), and 396 to 416 (GTSQ…GVGL).

Belongs to the SecY/SEC61-alpha family. As to quaternary structure, component of the Sec protein translocase complex. Heterotrimer consisting of SecY, SecE and SecG subunits. The heterotrimers can form oligomers, although 1 heterotrimer is thought to be able to translocate proteins. Interacts with the ribosome. Interacts with SecDF, and other proteins may be involved. Interacts with SecA.

It localises to the cell membrane. In terms of biological role, the central subunit of the protein translocation channel SecYEG. Consists of two halves formed by TMs 1-5 and 6-10. These two domains form a lateral gate at the front which open onto the bilayer between TMs 2 and 7, and are clamped together by SecE at the back. The channel is closed by both a pore ring composed of hydrophobic SecY resides and a short helix (helix 2A) on the extracellular side of the membrane which forms a plug. The plug probably moves laterally to allow the channel to open. The ring and the pore may move independently. The polypeptide is Protein translocase subunit SecY (Micrococcus luteus (Micrococcus lysodeikticus)).